The chain runs to 91 residues: Small ribosomal subunit protein uS19 (91 aa).

Positions 72 to 91 (GEFSPTRTYTGHGSEKGKKK) are disordered.

It belongs to the universal ribosomal protein uS19 family.

In terms of biological role, protein S19 forms a complex with S13 that binds strongly to the 16S ribosomal RNA. The polypeptide is Small ribosomal subunit protein uS19 (Mycoplasma mobile (strain ATCC 43663 / 163K / NCTC 11711) (Mesomycoplasma mobile)).